We begin with the raw amino-acid sequence, 1522 residues long: DNA topoisomerase 2-binding protein 1 (1522 aa).

BRCT domains lie at valine 101–aspartate 189 and phenylalanine 195–threonine 284. Threonine 298 carries the post-translational modification Phosphothreonine. Position 301 is a phosphoserine (serine 301). BRCT domains lie at alanine 354 to histidine 444, threonine 548 to leucine 633, and threonine 641 to isoleucine 738. The tract at residues isoleucine 756 to leucine 891 is interaction with CIP2A. A phosphothreonine mark is found at threonine 779 and threonine 848. The Nuclear localization signal signature appears at proline 852 to lysine 858. The residue at position 860 (serine 860) is a Phosphoserine. The residue at position 861 (threonine 861) is a Phosphothreonine. 3 positions are modified to phosphoserine: serine 864, serine 886, and serine 888. Residues glutamate 900 to histidine 991 form the BRCT 6 domain. At serine 1002 the chain carries Phosphoserine. The segment at valine 1018 to lysine 1058 is disordered. A compositionally biased stretch (acidic residues) spans aspartate 1024–valine 1036. Residues methionine 1039–lysine 1058 are compositionally biased toward polar residues. Residues threonine 1062 and threonine 1064 each carry the phosphothreonine modification. Polar residues predominate over residues serine 1083–serine 1114. The segment at serine 1083–arginine 1118 is disordered. BRCT domains lie at glutamate 1259–tryptophan 1351 and isoleucine 1389–leucine 1486. Positions threonine 1501–histidine 1522 are disordered. Serine 1504 is subject to Phosphoserine. The Nuclear localization signal motif lies at lysine 1517 to arginine 1520.

It belongs to the TOPBP1 family. Interacts (via BRCT domains 1 and 2) with (phosphorylated) MDC1; promoting TOPBP1 recruitment to DNA damage sites during mitosis. Interacts (via BRCT domains 7 and 8) with (autophosphorylated) ATR; promoting activation of ATR. Interacts (via BRCT domains 7 and 8) with (phosphorylated) POLQ; specifically binds POLQ phosphorylated by PLK1, promoting POLQ recruitment to DNA damage sites. Interacts (via BRCT domains 1 and 2) with (phosphorylated) RAD9A. Interacts (via BRCT domain 2) with (phosphorylated) TP53BP1. Interacts (via BRCT domain 2) with (phosphorylated) HTATSF1. Interacts (via BRCT domains 7 and 8) with (phosphorylated) RAD51; promoting RAD51 recruitment to damaged chromatin. Interacts with CIP2A; forming the CIP2A-TOPBP1 complex. Interacts with POLE. Interacts with UBR5. Interacts with E2F1. Interacts with PML. Interacts with SMARCA2. Interacts with SMARCA4. Interacts with RHNO1. May interact with TOP2B. Interacts with TICRR. Interacts with HELB. Interacts (via residues 1233-1522) with RECQL4. In terms of processing, phosphorylated on serine and threonine residues in response to X-ray irradiation. Post-translationally, ubiquitinated and degraded by the proteasome. X-ray irradiation reduces ubiquitination. Deubiquitinated by USP13; leading to TOPBP1 stabilizion and activation of the ATR-TOPBP1 axis pathway. As to expression, highly expressed in heart, brain, placenta, lung and kidney.

It is found in the nucleus. The protein localises to the chromosome. Its subcellular location is the cytoplasm. The protein resides in the cytoskeleton. It localises to the microtubule organizing center. It is found in the centrosome. The protein localises to the spindle pole. Its function is as follows. Scaffold protein that acts as a key protein-protein adapter in DNA replication and DNA repair. Composed of multiple BRCT domains, which specifically recognize and bind phosphorylated proteins, bringing proteins together into functional combinations. Required for DNA replication initiation but not for the formation of pre-replicative complexes or the elongation stages. Necessary for the loading of replication factors onto chromatin, including GMNC, CDC45, DNA polymerases and components of the GINS complex. Plays a central role in DNA repair by bridging proteins and promoting recruitment of proteins to DNA damage sites. Involved in double-strand break (DSB) repair via homologous recombination in S-phase by promoting the exchange between the DNA replication factor A (RPA) complex and RAD51. Mechanistically, TOPBP1 is recruited to DNA damage sites in S-phase via interaction with phosphorylated HTATSF1, and promotes the loading of RAD51, thereby facilitating RAD51 nucleofilaments formation and RPA displacement, followed by homologous recombination. Involved in microhomology-mediated end-joining (MMEJ) DNA repair by promoting recruitment of polymerase theta (POLQ) to DNA damage sites during mitosis. MMEJ is an alternative non-homologous end-joining (NHEJ) machinery that takes place during mitosis to repair DSBs in DNA that originate in S-phase. Recognizes and binds POLQ phosphorylated by PLK1, enabling its recruitment to DSBs for subsequent repair. Involved in G1 DNA damage checkpoint by acting as a molecular adapter that couples TP53BP1 and the 9-1-1 complex. In response to DNA damage, triggers the recruitment of checkpoint signaling proteins on chromatin, which activate the CHEK1 signaling pathway and block S-phase progression. Acts as an activator of the kinase activity of ATR. Also required for chromosomal stability when DSBs occur during mitosis by forming filamentous assemblies that bridge MDC1 and tether broken chromosomes during mitosis. Together with CIP2A, plays an essential role in the response to genome instability generated by the presence of acentric chromosome fragments derived from shattered chromosomes within micronuclei. Micronuclei, which are frequently found in cancer cells, consist of chromatin surrounded by their own nuclear membrane: following breakdown of the micronuclear envelope, a process associated with chromothripsis, the CIP2A-TOPBP1 complex tethers chromosome fragments during mitosis to ensure clustered segregation of the fragments to a single daughter cell nucleus, facilitating re-ligation with limited chromosome scattering and loss. Recruits the SWI/SNF chromatin remodeling complex to E2F1-responsive promoters, thereby down-regulating E2F1 activity and inhibiting E2F1-dependent apoptosis during G1/S transition and after DNA damage. The protein is DNA topoisomerase 2-binding protein 1 of Homo sapiens (Human).